The chain runs to 102 residues: UPF0751 protein DSY4013 (102 aa).

The protein belongs to the UPF0751 family.

This chain is UPF0751 protein DSY4013, found in Desulfitobacterium hafniense (strain Y51).